The sequence spans 260 residues: tRNA pseudouridine synthase A (260 aa).

Asp-52 (nucleophile) is an active-site residue. Position 111 (Tyr-111) interacts with substrate.

This sequence belongs to the tRNA pseudouridine synthase TruA family. Homodimer.

The catalysed reaction is uridine(38/39/40) in tRNA = pseudouridine(38/39/40) in tRNA. Its function is as follows. Formation of pseudouridine at positions 38, 39 and 40 in the anticodon stem and loop of transfer RNAs. This is tRNA pseudouridine synthase A from Beijerinckia indica subsp. indica (strain ATCC 9039 / DSM 1715 / NCIMB 8712).